We begin with the raw amino-acid sequence, 580 residues long: Glutamyl-tRNA(Gln) amidotransferase subunit B-2, chloroplastic/mitochondrial (580 aa).

Low complexity-rich tracts occupy residues 20–35 (RRDATAAASTSAATVS) and 42–59 (AVSTTTTTSSSSSSSAAV). The tract at residues 20–64 (RRDATAAASTSAATVSRGRRARAVSTTTTTSSSSSSSAAVDARDA) is disordered.

The protein belongs to the GatB/GatE family. GatB subfamily. Subunit of the heterotrimeric GatCAB amidotransferase (AdT) complex, composed of A, B and C subunits.

Its subcellular location is the mitochondrion. It is found in the plastid. The protein localises to the chloroplast. The enzyme catalyses L-glutamyl-tRNA(Gln) + L-glutamine + ATP + H2O = L-glutaminyl-tRNA(Gln) + L-glutamate + ADP + phosphate + H(+). Functionally, allows the formation of correctly charged Gln-tRNA(Gln) through the transamidation of misacylated Glu-tRNA(Gln) in chloroplasts and mitochondria. The reaction takes place in the presence of glutamine and ATP through an activated gamma-phospho-Glu-tRNA(Gln). In Micromonas pusilla (strain CCMP1545) (Picoplanktonic green alga), this protein is Glutamyl-tRNA(Gln) amidotransferase subunit B-2, chloroplastic/mitochondrial.